The primary structure comprises 109 residues: MKKFALLAGLFVFAPMTWAQDYNIKNGLPSETYITCAEANEMAKTDSAQVAEIVAVMGNASVASRDLKIEQSPELSAKVVEKLNQVCAKDPQMLLITAIDDTMRAIGKK.

Positions 1–19 (MKKFALLAGLFVFAPMTWA) are cleaved as a signal peptide.

This is an uncharacterized protein from Escherichia coli O6:H1 (strain CFT073 / ATCC 700928 / UPEC).